We begin with the raw amino-acid sequence, 301 residues long: Phosducin-like protein (301 aa).

Residue T2 is modified to N-acetylthreonine. A disordered region spans residues 18-57; sequence SSSEDEDSDHEDKDRGRCAPASSSVPAEAELAGEGISVNT. A phosphoserine mark is found at S20 and S25. A compositionally biased stretch (low complexity) spans 36–49; sequence APASSSVPAEAELA. The Phosducin domain maps to 36–299; the sequence is APASSSVPAE…TCHSEDSDLE (264 aa). S226, S293, and S296 each carry phosphoserine.

Belongs to the phosducin family. Forms a complex with the beta and gamma subunits of the GTP-binding protein, transducin. Interacts with the CCT chaperonin complex.

Its subcellular location is the cell projection. The protein localises to the cilium. Acts as a positive regulator of hedgehog signaling and regulates ciliary function. Functionally, functions as a co-chaperone for CCT in the assembly of heterotrimeric G protein complexes, facilitates the assembly of both Gbeta-Ggamma and RGS-Gbeta5 heterodimers. Its function is as follows. Acts as a negative regulator of heterotrimeric G proteins assembly by trapping the preloaded G beta subunits inside the CCT chaperonin. This Homo sapiens (Human) protein is Phosducin-like protein (PDCL).